Reading from the N-terminus, the 257-residue chain is Gene 3 protein (257 aa).

The span at 163-176 (STENLLGQTQSSTH) shows a compositional bias: polar residues. The disordered stretch occupies residues 163 to 257 (STENLLGQTQ…SDSSVSSVFF (95 aa)). A compositionally biased stretch (basic and acidic residues) spans 214 to 240 (SIREETVSGMARAREECNSPSEHDRLT).

The protein is Gene 3 protein of Equine herpesvirus 1 (strain Ab4p) (EHV-1).